The sequence spans 79 residues: Sec-independent protein translocase protein TatA (79 aa).

Residues 1–21 (MGGFTSIWHWVIVLLVIVLLF) form a helical membrane-spanning segment. A disordered region spans residues 48-79 (EEEAKNEPKTLDAQVTQAKVHESSEIKNKQEG). Basic and acidic residues predominate over residues 66-79 (KVHESSEIKNKQEG).

The protein belongs to the TatA/E family. The Tat system comprises two distinct complexes: a TatABC complex, containing multiple copies of TatA, TatB and TatC subunits, and a separate TatA complex, containing only TatA subunits. Substrates initially bind to the TatABC complex, which probably triggers association of the separate TatA complex to form the active translocon.

It is found in the cell inner membrane. In terms of biological role, part of the twin-arginine translocation (Tat) system that transports large folded proteins containing a characteristic twin-arginine motif in their signal peptide across membranes. TatA could form the protein-conducting channel of the Tat system. The protein is Sec-independent protein translocase protein TatA of Helicobacter acinonychis (strain Sheeba).